We begin with the raw amino-acid sequence, 550 residues long: MWASWIPVLCLGVCLLLPPEPVGSEGAVPIPITCSTRGLDIRKEKADVLCPGGCPLEEFSVFGHIVYASVSSICGAAVHRGVIGHSGGPVRIYSLPGRENYSSVVANGIQSQMLSRWSASFTVTKGKSGTQEATGQAVSTAHPATGKRLKKTPEKKTGNKDCKADIAFLIDGSFNIGQRRFNLQKNFVGKVALMLGIGTEGPHVGLVQASEHPKIEFYLKNFTSAKDVLFAIKEVAFRGGNSNTGKALKHTAQKFFTADTGARKGIPKVVVVFIDGWPSDDIEEAGIVAREFGVNVFIVSVAKPIPEELGMVQDVAFVDKAVCRNNGFFSYHMPNWFGTTKYVKPLVQKLCTHEQMMCSKTCYNSVNIAFLIDGSSSVGESNFRLMLKFVSNIAKTFEISDIGAKIAAVQFTYDQRTEFSFTDYSTKENVLAVIRNISYMSGGTATGDAISFTVRNVFGPVRDSPNKNFLVIVTDGQSYDDVRGPAAAAHDAGITIFSVGVAWAPLDDLKDMASKPKESHAFFTREFTGLEPIVSDVIRGICRDFLESQQ.

The N-terminal stretch at M1–S24 is a signal peptide. Residues V28–F121 enclose the LCCL domain. Intrachain disulfides connect C34–C50 and C54–C74. N-linked (GlcNAc...) asparagine glycosylation occurs at N100. Over residues S128–S139 the composition is skewed to polar residues. Positions S128–G158 are disordered. VWFA domains follow at residues D165–L350 and N367–V537. N-linked (GlcNAc...) asparagine glycosylation is found at N221 and N436.

Monomer. May form homodimer. Interacts with type II collagen. Interacts with SLC44A2. Interacts with ANXA2. Post-translationally, N-glycosylated.

The protein localises to the secreted. It localises to the extracellular space. Its function is as follows. Plays a role in the control of cell shape and motility in the trabecular meshwork. The protein is Cochlin (COCH) of Bos taurus (Bovine).